Consider the following 403-residue polypeptide: Phosphopentomutase (403 aa).

Mn(2+)-binding residues include D13, D298, H303, D339, H340, and H351.

The protein belongs to the phosphopentomutase family. The cofactor is Mn(2+).

The protein localises to the cytoplasm. It carries out the reaction 2-deoxy-alpha-D-ribose 1-phosphate = 2-deoxy-D-ribose 5-phosphate. It catalyses the reaction alpha-D-ribose 1-phosphate = D-ribose 5-phosphate. Its pathway is carbohydrate degradation; 2-deoxy-D-ribose 1-phosphate degradation; D-glyceraldehyde 3-phosphate and acetaldehyde from 2-deoxy-alpha-D-ribose 1-phosphate: step 1/2. Its function is as follows. Isomerase that catalyzes the conversion of deoxy-ribose 1-phosphate (dRib-1-P) and ribose 1-phosphate (Rib-1-P) to deoxy-ribose 5-phosphate (dRib-5-P) and ribose 5-phosphate (Rib-5-P), respectively. The protein is Phosphopentomutase of Streptococcus pyogenes serotype M28 (strain MGAS6180).